The primary structure comprises 424 residues: L-glutamine:2-deoxy-scyllo-inosose aminotransferase (424 aa).

An N6-(pyridoxal phosphate)lysine modification is found at lysine 202.

The protein belongs to the DegT/DnrJ/EryC1 family. L-glutamine:2-deoxy-scyllo-inosose/scyllo-inosose aminotransferase subfamily. Requires pyridoxal 5'-phosphate as cofactor.

The catalysed reaction is 2-deoxy-L-scyllo-inosose + L-glutamine = 2-deoxy-scyllo-inosamine + 2-oxoglutaramate. It carries out the reaction 3-amino-2,3-dideoxy-scyllo-inosose + L-glutamine = 2-deoxystreptamine + 2-oxoglutaramate. The protein operates within metabolic intermediate biosynthesis; 2-deoxystreptamine biosynthesis; 2-deoxystreptamine from D-glucose 6-phosphate: step 2/4. It functions in the pathway metabolic intermediate biosynthesis; 2-deoxystreptamine biosynthesis; 2-deoxystreptamine from D-glucose 6-phosphate: step 4/4. It participates in antibiotic biosynthesis; paromomycin biosynthesis. In terms of biological role, catalyzes the PLP-dependent transamination of 2-deoxy-scyllo-inosose (2-DOI) to form 2-deoxy-scyllo-inosamine (2-DOIA) using L-glutamine as the amino donor. Also catalyzes the transamination of 3-amino-2,3-dideoxy-scyllo-inosose (keto-2-DOIA) into 2-deoxystreptamine (2-DOS). The sequence is that of L-glutamine:2-deoxy-scyllo-inosose aminotransferase (parS) from Streptomyces paromomycinus (Streptomyces rimosus subsp. paromomycinus).